Consider the following 724-residue polypeptide: Threonine--tRNA ligase 2, cytoplasmic (724 aa).

N-acetylalanine is present on A2. A coiled-coil region spans residues Q44–R72. The tract at residues R90–V112 is disordered. The TGS domain maps to D155 to T220. S451 carries the post-translational modification Phosphoserine.

It belongs to the class-II aminoacyl-tRNA synthetase family. May be a component of the multisynthetase complex (MSC), a large multi-subunit complex which contains at least eight different aminoacyl-tRNA synthetases plus three auxillary subunits AIMP1, AIMP2 and EEF1E1. Interacts with the MSC components EPRS1, AIMP1, AIMP2 and KARS1.

Its subcellular location is the cytoplasm. It is found in the nucleus. It carries out the reaction tRNA(Thr) + L-threonine + ATP = L-threonyl-tRNA(Thr) + AMP + diphosphate + H(+). Its function is as follows. Catalyzes the attachment of threonine to tRNA(Thr) in a two-step reaction: threonine is first activated by ATP to form Thr-AMP and then transferred to the acceptor end of tRNA(Thr). Also edits incorrectly charged tRNA(Thr) via its editing domain, at the post-transfer stage. In Bos taurus (Bovine), this protein is Threonine--tRNA ligase 2, cytoplasmic (TARS3).